The following is a 464-amino-acid chain: UDP-glycosyltransferase 76C1 (464 aa).

Residues S279, 338-340, 355-363, and 377-380 each bind UDP-alpha-D-glucose; these read APQ, HNGWNSTLE, and KWDQ.

Belongs to the UDP-glycosyltransferase family.

Its activity is regulated as follows. Inhibited by olomoucine and 3-isobutyl-1-methylxanthine. Functionally, involved in the N-glucosylation of cytokinins. Catalyzes the formation of both the 7-N and the 9-N-glucosides. The chain is UDP-glycosyltransferase 76C1 (UGT76C1) from Arabidopsis thaliana (Mouse-ear cress).